Reading from the N-terminus, the 120-residue chain is Large ribosomal subunit protein uL18 (120 aa).

Belongs to the universal ribosomal protein uL18 family. Part of the 50S ribosomal subunit; part of the 5S rRNA/L5/L18/L25 subcomplex. Contacts the 5S and 23S rRNAs.

Its function is as follows. This is one of the proteins that bind and probably mediate the attachment of the 5S RNA into the large ribosomal subunit, where it forms part of the central protuberance. In Gluconobacter oxydans (strain 621H) (Gluconobacter suboxydans), this protein is Large ribosomal subunit protein uL18.